We begin with the raw amino-acid sequence, 855 residues long: Valine--tRNA ligase (855 aa).

A 'HIGH' region motif is present at residues 44–54 (PNVTGVLHIGH). The short motif at 524–528 (KMSKT) is the 'KMSKS' region element. Lysine 527 serves as a coordination point for ATP. Residues 797–827 (KVEEDPARKQKEREQLEKNIANSKRQLGDEV) adopt a coiled-coil conformation.

This sequence belongs to the class-I aminoacyl-tRNA synthetase family. ValS type 1 subfamily. In terms of assembly, monomer.

Its subcellular location is the cytoplasm. It carries out the reaction tRNA(Val) + L-valine + ATP = L-valyl-tRNA(Val) + AMP + diphosphate. Catalyzes the attachment of valine to tRNA(Val). As ValRS can inadvertently accommodate and process structurally similar amino acids such as threonine, to avoid such errors, it has a 'posttransfer' editing activity that hydrolyzes mischarged Thr-tRNA(Val) in a tRNA-dependent manner. The sequence is that of Valine--tRNA ligase from Solibacter usitatus (strain Ellin6076).